Consider the following 332-residue polypeptide: UBA domain-containing protein Mud1 (332 aa).

The active site involves Asp-127. The interval 246–298 (GLGIEPASKASASSPNPQSGTRLGTKESVAPNNEGSSNPPSLVNPPTDPGLNS) is disordered. A compositionally biased stretch (low complexity) spans 251-264 (PASKASASSPNPQS). Polar residues predominate over residues 275–286 (APNNEGSSNPPS). Residues 291 to 332 (PTDPGLNSKIAQLVSMGFDPLEAAQALDAANGDLDVAASFLL) enclose the UBA domain.

It belongs to the DDI1 family. As to quaternary structure, homodimer. Interacts (via UBA domain) with polyubiquitin (polyUb) chains (via Lys-48-linked polyUbs). Has weak binding affinity for monoubiquitin. According to another report, has no affinity for monoubiquitin.

It localises to the cytoplasm. The protein resides in the cell membrane. In terms of biological role, recognizes and binds polyubiquitin chains. Acts as a linker between the 19S proteasome and polyubiquitinated proteins via UBA domain interactions with ubiquitin for their subsequent degradation. Aspartic protease. Appears to act as negative regulator of constitutive exocytosis. May act at the level of secretory vesicle docking and fusion as a competitive inhibitor of SNARE assembly. Required for S-phase checkpoint control. This Schizosaccharomyces pombe (strain 972 / ATCC 24843) (Fission yeast) protein is UBA domain-containing protein Mud1.